A 1262-amino-acid polypeptide reads, in one-letter code: Separin homolog sep-1 (1262 aa).

One can recognise a Peptidase C50 domain in the interval 957–1051; it reads VQNAYYILDP…SVRTIPQALG (95 aa). Residue Cys1040 is part of the active site. Positions 1147–1262 are disordered; it reads KDQRNLPQTP…ARTPSRSRNL (116 aa). Composition is skewed to polar residues over residues 1151–1162 and 1177–1197; these read NLPQTPKTSART and FVTS…NKSP. The segment covering 1243-1262 has biased composition (low complexity); sequence TPTTRTTRSSARTPSRSRNL.

Forms a complex with securin-like protein ify-1 (via C-terminus). Interaction with ify-1 stabilizes sep-1. Also maintains the complex in the cytoplasm during interphase and recruits it to chromosomes during the first meiotic division. Expressed in oocytes. Expressed in male germline. Expressed in spermatocytes but undetectable in spermatids (at protein level).

Its subcellular location is the cytoplasm. It is found in the chromosome. The protein localises to the cytoplasmic granule. It localises to the cytoskeleton. The protein resides in the microtubule organizing center. Its subcellular location is the centrosome. It is found in the spindle. The protein localises to the cleavage furrow. It localises to the midbody. It carries out the reaction All bonds known to be hydrolyzed by this endopeptidase have arginine in P1 and an acidic residue in P4. P6 is often occupied by an acidic residue or by a hydroxy-amino-acid residue, the phosphorylation of which enhances cleavage.. Its activity is regulated as follows. Probably maintained in an inactive state via its interaction with securin ify-1 which acts as a pseudosubstrate thereby blocking access to the catalytic site. Upon ify-1 degradation at the onset of anaphase, sep-1 is likely to become active. In addition, interaction with ify-1 stabilizes sep-1. In terms of biological role, cysteine protease, which plays a central role in homologous chromosome separation during meiosis I and in sister chromatid separation during embryonic mitosis. Promotes chromosome/sister chromatid segregation by cleaving the scc-1 (mitosis) and rec-8 (meiosis) subunits of the cohesin complex at the onset of anaphase. May cleave histone H3-like protein cpar-1 during meiosis I metaphase-anaphase transition. Promotes cortical granule exocytosis after oocyte fertilization during the first meiotic anaphase. Essential for embryonic cytokinesis by regulating rab-11-positive vesicle trafficking at the plasma membrane at the cleavage furrow and midbody. Regulates centriole segregation during spermatocyte meiosis. Required for embryonic anterior-posterior axis formation. This Caenorhabditis elegans protein is Separin homolog sep-1.